Consider the following 521-residue polypeptide: MQAIHENYTDNPSSSITRERQHEDMKGAQFVVQSNLKIMSRSIAALSKISEDVLIEVSEGGLFFKTVNRSKFCVFRFAPEFFNACDVSMINKKAVNICRLSMKSAQRIFKGVAFGEKNFVGCEFRIDPKAERMMVKLQMNYDIERTIHAKLREMGSMLHKPTYNRSGCRNITVVFASTLLPIFVQMKGDIEVTMKVTDDGLTIRNFHSLDGVTMFNMGVEKGAKKVKTETTITCEKLTRHKIQIPVEFSFSIKEFLSIVTFADQLGSEVCMYYDLPGKPLIVSIEAHPNFDIELALATMGSDDEIDLDGGILKETMAQHEEEEDKSTAHSSSSRRKSKAIDTSSSGTQKSKKCSESLSQEETTRSQSLPSRNRFVPEIPVAEQSWRDREVTVYEQREPSPDLQIVEEVMEIDNQPIVTRTIKEEHSVEQAMQDVSIETIPVETPEENIIPVEVEMLEEPEQEDQEIFKIPQPKRRKTAEDDRNRKIRRILMGTETTSKMRMSQQFDKRLGPLVSDTQYESR.

Disordered stretches follow at residues 1–20 (MQAIHENYTDNPSSSITRER), 318–375 (QHEE…NRFV), and 492–521 (GTETTSKMRMSQQFDKRLGPLVSDTQYESR). 2 stretches are compositionally biased toward polar residues: residues 355 to 370 (ESLSQEETTRSQSLPS) and 493 to 504 (TETTSKMRMSQQ).

It belongs to the rad9 family. As to quaternary structure, putative component of the toroidal 9-1-1 (RAD9-RAD1-HUS1) complex, composed of hpr-9, mrt-2 and hus-1.

Functionally, may be a component of the 9-1-1 cell-cycle checkpoint response complex that plays a major role in DNA repair. This Caenorhabditis elegans protein is Cell cycle checkpoint protein hpr-9.